A 219-amino-acid polypeptide reads, in one-letter code: Melanoma-associated antigen H1 (219 aa).

Positions 1–13 (MPRGRKSRRRRNA) are enriched in basic residues. A disordered region spans residues 1 to 84 (MPRGRKSRRR…QKPSVPRSNF (84 aa)). Positions 1–198 (MPRGRKSRRR…KDWPCNYDWD (198 aa)) constitute an MAGE domain. Acidic residues predominate over residues 44 to 57 (PEDDLSGPEEDPST). Residues 58–74 (PEEASTTPEEASSTAQA) are compositionally biased toward low complexity. Phosphotyrosine is present on Tyr195.

The sequence is that of Melanoma-associated antigen H1 (MAGEH1) from Homo sapiens (Human).